We begin with the raw amino-acid sequence, 220 residues long: Probable GTP-binding protein EngB (220 aa).

The 175-residue stretch at 26-200 (EGIEIAFAGR…RAKLDEWYAP (175 aa)) folds into the EngB-type G domain. Residues 34–41 (GRSNAGKS), 61–65 (GRTQL), 79–82 (DLPG), 146–149 (TKAD), and 179–181 (FSS) each bind GTP. Residues S41 and T63 each contribute to the Mg(2+) site.

It belongs to the TRAFAC class TrmE-Era-EngA-EngB-Septin-like GTPase superfamily. EngB GTPase family. It depends on Mg(2+) as a cofactor.

Its function is as follows. Necessary for normal cell division and for the maintenance of normal septation. The chain is Probable GTP-binding protein EngB from Vibrio cholerae serotype O1 (strain ATCC 39315 / El Tor Inaba N16961).